Consider the following 154-residue polypeptide: S-ribosylhomocysteine lyase (154 aa).

3 residues coordinate Fe cation: His-58, His-62, and Cys-125.

Belongs to the LuxS family. Homodimer. The cofactor is Fe cation.

The catalysed reaction is S-(5-deoxy-D-ribos-5-yl)-L-homocysteine = (S)-4,5-dihydroxypentane-2,3-dione + L-homocysteine. Its function is as follows. Involved in the synthesis of autoinducer 2 (AI-2) which is secreted by bacteria and is used to communicate both the cell density and the metabolic potential of the environment. The regulation of gene expression in response to changes in cell density is called quorum sensing. Catalyzes the transformation of S-ribosylhomocysteine (RHC) to homocysteine (HC) and 4,5-dihydroxy-2,3-pentadione (DPD). This chain is S-ribosylhomocysteine lyase, found in Dichelobacter nodosus (strain VCS1703A).